A 389-amino-acid chain; its full sequence is tRNA-specific 2-thiouridylase MnmA (389 aa).

ATP-binding positions include 9-16 (GMSGGVDS) and Met35. The interval 95 to 97 (NPD) is interaction with target base in tRNA. Residue Cys100 is the Nucleophile of the active site. Cys100 and Cys196 are disulfide-bonded. An ATP-binding site is contributed by Gly124. Residues 146-148 (KDQ) are interaction with tRNA. The active-site Cysteine persulfide intermediate is the Cys196. Positions 308–309 (RY) are interaction with tRNA.

Belongs to the MnmA/TRMU family.

The protein resides in the cytoplasm. The catalysed reaction is S-sulfanyl-L-cysteinyl-[protein] + uridine(34) in tRNA + AH2 + ATP = 2-thiouridine(34) in tRNA + L-cysteinyl-[protein] + A + AMP + diphosphate + H(+). In terms of biological role, catalyzes the 2-thiolation of uridine at the wobble position (U34) of tRNA, leading to the formation of s(2)U34. This is tRNA-specific 2-thiouridylase MnmA from Burkholderia ambifaria (strain MC40-6).